The following is a 292-amino-acid chain: Acetyl-coenzyme A carboxylase carboxyl transferase subunit beta (292 aa).

In terms of domain architecture, CoA carboxyltransferase N-terminal spans 36–292 (MWSKCEKCAK…LLRMHEVDYE (257 aa)). Zn(2+) is bound by residues Cys-40, Cys-43, Cys-59, and Cys-62. A C4-type zinc finger spans residues 40 to 62 (CEKCAKILYTEDLRENFNVCPNC).

This sequence belongs to the AccD/PCCB family. As to quaternary structure, acetyl-CoA carboxylase is a heterohexamer composed of biotin carboxyl carrier protein (AccB), biotin carboxylase (AccC) and two subunits each of ACCase subunit alpha (AccA) and ACCase subunit beta (AccD). Zn(2+) is required as a cofactor.

The protein resides in the cytoplasm. The enzyme catalyses N(6)-carboxybiotinyl-L-lysyl-[protein] + acetyl-CoA = N(6)-biotinyl-L-lysyl-[protein] + malonyl-CoA. It functions in the pathway lipid metabolism; malonyl-CoA biosynthesis; malonyl-CoA from acetyl-CoA: step 1/1. Component of the acetyl coenzyme A carboxylase (ACC) complex. Biotin carboxylase (BC) catalyzes the carboxylation of biotin on its carrier protein (BCCP) and then the CO(2) group is transferred by the transcarboxylase to acetyl-CoA to form malonyl-CoA. In Clostridium perfringens (strain 13 / Type A), this protein is Acetyl-coenzyme A carboxylase carboxyl transferase subunit beta.